The sequence spans 1240 residues: ATP-dependent helicase/nuclease subunit A (1240 aa).

Residues 12 to 485 (SQWTDDQWKA…IDLAKNFRSR (474 aa)) enclose the UvrD-like helicase ATP-binding domain. Position 33–40 (33–40 (AAAGSGKT)) interacts with ATP. Residues 497 to 804 (KQIMGEEVGE…RIMTIHKSKG (308 aa)) form the UvrD-like helicase C-terminal domain.

This sequence belongs to the helicase family. AddA subfamily. As to quaternary structure, heterodimer of AddA and AddB/RexB. Mg(2+) serves as cofactor.

The catalysed reaction is Couples ATP hydrolysis with the unwinding of duplex DNA by translocating in the 3'-5' direction.. It carries out the reaction ATP + H2O = ADP + phosphate + H(+). Its function is as follows. The heterodimer acts as both an ATP-dependent DNA helicase and an ATP-dependent, dual-direction single-stranded exonuclease. Recognizes the chi site generating a DNA molecule suitable for the initiation of homologous recombination. The AddA nuclease domain is required for chi fragment generation; this subunit has the helicase and 3' -&gt; 5' nuclease activities. The chain is ATP-dependent helicase/nuclease subunit A from Bacillus cereus (strain AH820).